A 161-amino-acid polypeptide reads, in one-letter code: Nucleotide-binding protein lpl1175 (161 aa).

Belongs to the YajQ family.

In terms of biological role, nucleotide-binding protein. This is Nucleotide-binding protein lpl1175 from Legionella pneumophila (strain Lens).